The chain runs to 300 residues: UDP-N-acetylenolpyruvoylglucosamine reductase (300 aa).

An FAD-binding PCMH-type domain is found at 22–190 (RVGGAAEWLA…LSARFRLQPG (169 aa)). R169 is a catalytic residue. S220 serves as the catalytic Proton donor. E290 is an active-site residue.

The protein belongs to the MurB family. FAD serves as cofactor.

The protein localises to the cytoplasm. It catalyses the reaction UDP-N-acetyl-alpha-D-muramate + NADP(+) = UDP-N-acetyl-3-O-(1-carboxyvinyl)-alpha-D-glucosamine + NADPH + H(+). Its pathway is cell wall biogenesis; peptidoglycan biosynthesis. In terms of biological role, cell wall formation. The chain is UDP-N-acetylenolpyruvoylglucosamine reductase from Synechococcus sp. (strain CC9605).